We begin with the raw amino-acid sequence, 353 residues long: 4-hydroxy-3-methylbut-2-en-1-yl diphosphate synthase (flavodoxin) (353 aa).

Residues Cys-268, Cys-271, Cys-303, and Glu-310 each contribute to the [4Fe-4S] cluster site.

This sequence belongs to the IspG family. Requires [4Fe-4S] cluster as cofactor.

It carries out the reaction (2E)-4-hydroxy-3-methylbut-2-enyl diphosphate + oxidized [flavodoxin] + H2O + 2 H(+) = 2-C-methyl-D-erythritol 2,4-cyclic diphosphate + reduced [flavodoxin]. The protein operates within isoprenoid biosynthesis; isopentenyl diphosphate biosynthesis via DXP pathway; isopentenyl diphosphate from 1-deoxy-D-xylulose 5-phosphate: step 5/6. Its function is as follows. Converts 2C-methyl-D-erythritol 2,4-cyclodiphosphate (ME-2,4cPP) into 1-hydroxy-2-methyl-2-(E)-butenyl 4-diphosphate. The protein is 4-hydroxy-3-methylbut-2-en-1-yl diphosphate synthase (flavodoxin) of Ruminiclostridium cellulolyticum (strain ATCC 35319 / DSM 5812 / JCM 6584 / H10) (Clostridium cellulolyticum).